A 749-amino-acid polypeptide reads, in one-letter code: Polyribonucleotide nucleotidyltransferase (749 aa).

The Mg(2+) site is built by D487 and D493. In terms of domain architecture, KH spans 554–613 (PSTTTIKIDKDKIRDIIGPGGKIIKEICETSGAKIDISDDGTVSVYASDRDKLKVALDKI). The region spanning 623–691 (GEIFNGTVVK…NKGKAKLTIK (69 aa)) is the S1 motif domain. A disordered region spans residues 691–749 (KNADKDKSSNNTKPKTNVNNTNKDNSEPEQRRDSSKKRAWNEDNNAETAEVITERKYFN). Over residues 699–713 (SNNTKPKTNVNNTNK) the composition is skewed to low complexity. Residues 714 to 723 (DNSEPEQRRD) are compositionally biased toward basic and acidic residues.

It belongs to the polyribonucleotide nucleotidyltransferase family. Mg(2+) serves as cofactor.

The protein localises to the cytoplasm. It carries out the reaction RNA(n+1) + phosphate = RNA(n) + a ribonucleoside 5'-diphosphate. In terms of biological role, involved in mRNA degradation. Catalyzes the phosphorolysis of single-stranded polyribonucleotides processively in the 3'- to 5'-direction. This is Polyribonucleotide nucleotidyltransferase from Rickettsia conorii (strain ATCC VR-613 / Malish 7).